The following is a 486-amino-acid chain: HTH-type transcriptional regulator PrpR (486 aa).

Positions 22–76 constitute an HTH cro/C1-type domain; the sequence is LRRLRQERGLTQVALAKALDLSTSYVNQLENDQRPITVPVLLLLTERFDLSAQYF. Positions 33–52 form a DNA-binding region, H-T-H motif; that stretch reads QVALAKALDLSTSYVNQLEN.

Belongs to the short-chain fatty acyl-CoA assimilation regulator (ScfR) family.

It participates in organic acid metabolism; propanoate degradation. It functions in the pathway steroid metabolism; cholesterol metabolism. Plays a key role in regulating expression of enzymes involved in the catabolism of short chain fatty acids (SCFA) via both the glyoxylate (acetyl degradation route) and the methylcitrate cycle (propionate degradation route). Required for intracellular growth in macrophages and for the assimilation of cholesterol-derived propionate. PrpR acts as a transcriptional activator of prpDC and icl genes when propionate is the main carbon source, and as a ramB repressor. During growth on propionate, PrpR also acts as a transcriptional repressor of dnaA, which encodes the DnaA initiator protein responsible for initiating chromosomal replication. It is possibly involved in the regulation of genes responsible for controlling cholesterol utilization. The sequence is that of HTH-type transcriptional regulator PrpR from Mycobacterium tuberculosis (strain ATCC 25618 / H37Rv).